Here is a 217-residue protein sequence, read N- to C-terminus: MLSILILAATAAGLVILLFQRLWTVLGPHHVTPRESLRLLIVAGSGGHTTEILRLVGSLSNAYSPRHYVIAESDEMSAKKIHSLEELSRAQNDSTTEYPKYHLHRIPRSREVRQSWLSSVFTTFYSMWFSFPLVLRIKPDLVLCNGPGTCVPICVSALLLGILGVKKVIIVYVESICRVETLSLSGKILRHLSDYFIVQWPTLKEKYPKSVYLGRIV.

Residues 1 to 3 (MLS) are Lumenal-facing. Residues 4 to 26 (ILILAATAAGLVILLFQRLWTVL) form a helical membrane-spanning segment. Over 27-217 (GPHHVTPRES…PKSVYLGRIV (191 aa)) the chain is Cytoplasmic.

This sequence belongs to the ALG14 family. In terms of assembly, forms with ALG13 the active heterodimeric UDP-N-acetylglucosamine transferase complex.

The protein localises to the endoplasmic reticulum membrane. Part of the UDP-N-acetylglucosamine transferase complex that operates in the biosynthetic pathway of dolichol-linked oligosaccharides, the glycan precursors employed in protein asparagine (N)-glycosylation. The assembly of dolichol-linked oligosaccharides begins on the cytosolic side of the endoplasmic reticulum membrane and finishes in its lumen. The sequential addition of sugars to dolichol pyrophosphate produces dolichol-linked oligosaccharides containing fourteen sugars, including two GlcNAcs, nine mannoses and three glucoses. Once assembled, the oligosaccharides are transferred from the lipid to nascent proteins by oligosaccharyltransferases. Functions as a protein-membrane adapter recruiting ALG13 at the cytoplasmic face of the endoplasmic reticulum, where the complex catalyzes the second step of dolichol pyrophosphate biosynthesis, transferring a beta1,4-linked N-acetylglucosamine (GlcNAc) from UDP-GlcNAc to GlcNAc-pyrophosphatedolichol (Gn-PDol) to produce N,N'-diacetylchitobiosyl diphosphodolichol. N,N'-diacetylchitobiosyl diphosphodolichol is a substrate for ALG1, the following enzyme in the biosynthetic pathway. The chain is UDP-N-acetylglucosamine transferase subunit ALG14 from Mus musculus (Mouse).